Here is a 147-residue protein sequence, read N- to C-terminus: Large ribosomal subunit protein uL11 (147 aa).

It belongs to the universal ribosomal protein uL11 family. In terms of assembly, part of the ribosomal stalk of the 50S ribosomal subunit. Interacts with L10 and the large rRNA to form the base of the stalk. L10 forms an elongated spine to which L12 dimers bind in a sequential fashion forming a multimeric L10(L12)X complex. One or more lysine residues are methylated.

Forms part of the ribosomal stalk which helps the ribosome interact with GTP-bound translation factors. This chain is Large ribosomal subunit protein uL11, found in Bacteroides thetaiotaomicron (strain ATCC 29148 / DSM 2079 / JCM 5827 / CCUG 10774 / NCTC 10582 / VPI-5482 / E50).